Here is an 88-residue protein sequence, read N- to C-terminus: Sec-independent protein translocase protein TatA (88 aa).

Residues 4 to 24 traverse the membrane as a helical segment; sequence LSIWHWLIVLAVVLVLFVGGG. Residues 45 to 88 are disordered; the sequence is ADDETMEGSTGSGGHIAPPGPAAGTVQRDASFSGTGRPSGSSTP. The segment covering 75 to 88 has biased composition (low complexity); the sequence is SFSGTGRPSGSSTP.

It belongs to the TatA/E family. As to quaternary structure, the Tat system comprises two distinct complexes: a TatABC complex, containing multiple copies of TatA, TatB and TatC subunits, and a separate TatA complex, containing only TatA subunits. Substrates initially bind to the TatABC complex, which probably triggers association of the separate TatA complex to form the active translocon.

The protein localises to the cell inner membrane. Part of the twin-arginine translocation (Tat) system that transports large folded proteins containing a characteristic twin-arginine motif in their signal peptide across membranes. TatA could form the protein-conducting channel of the Tat system. The chain is Sec-independent protein translocase protein TatA from Gluconacetobacter diazotrophicus (strain ATCC 49037 / DSM 5601 / CCUG 37298 / CIP 103539 / LMG 7603 / PAl5).